Reading from the N-terminus, the 634-residue chain is MNLHAAYIDYALRRSQHMQAEMSGADNVLLKDYQLFVAKVFLGLDSMNSLLLFQETGVGKTVTAVYMLKHLRFLYTSWTVLVLVKKALVEEPWMNTILRFAPEVAKDCVFMNYDDQNFHNKFFTNIKTVSARSRIFVIIDECHNFISKSLSREDGRARNTKHVYNFLARHIASSHNKLLCLSATPIVNNVREFALLVNLLRPGVLPPQSLFHNKRLLDEAELVSKLGCICSYLVHHEASIFEDVEGSELFARKRVLLKYVRMSAKQEDIYHKARAAEFRSGIAVFRVHRRMAATFAFDEFPVRKNLTPDEYDALVASLVRDFEALFAGRALSDATRARLRAGEPIECAASAEDLSLYQALYEHSCKYAEVCVAILASPGKCLVFEPFINLSGIRIFVKYLEVFGISYIEFSSRTKDTRTRAVAEFNRVENTNGELIKTCVFSLSGNEGISFLSINDIFILDMTWNEASLKQIIGRAIRLHSHANNPPERRYVNVHFVVAQLGSGAPSVDDDLLEIIQNKAREFSQLYRVLKLASIEWIHQHCREFAPVDDEAGFRALCSRAIDVTRGASTRRALATGENIWYAFSTLMITVHPGFKTEDGRVYDADGNFLTTMPERPIVRVQGTRLVYIFPELR.

The Helicase ATP-binding domain occupies 41–203; that stretch reads FLGLDSMNSL…ALLVNLLRPG (163 aa). ATP is bound at residue 54–61; it reads QETGVGKT. The DEXH box signature appears at 140-143; the sequence is DECH. A Helicase C-terminal domain is found at 355–531; it reads SLYQALYEHS…EFSQLYRVLK (177 aa). A binding to the cap-specific mRNA (nucleoside-2'-O-)-methyltransferase region spans residues 456 to 523; it reads DIFILDMTWN…EIIQNKAREF (68 aa).

This sequence belongs to the helicase family. NPH I subfamily. In terms of assembly, monomer. Interacts (via C-terminus) with RAP94 (via N-terminus). Interacts with the cap-specific mRNA (nucleoside-2'-O-)-methyltransferase.

Its subcellular location is the virion. It carries out the reaction a ribonucleoside 5'-triphosphate + H2O = a ribonucleoside 5'-diphosphate + phosphate + H(+). Functionally, DNA-dependent ATPase required for providing the needed energy to achieve the termination of early transcripts. Acts in concert with the RAP94 subunit of the virion RNA polymerase and the capping enzyme/VTF to catalyze release of UUUUUNU-containing nascent RNA from the elongation complex. NPH-I must bind ssDNA in order to exhibit ATPase activity. This is Nucleoside triphosphatase I (NPH1) from Homo sapiens (Human).